The following is a 65-amino-acid chain: Large ribosomal subunit protein bL35 (65 aa).

Basic residues predominate over residues 1-15; it reads MPKMKTKSSAKKRFS. Positions 1 to 21 are disordered; it reads MPKMKTKSSAKKRFSIRAGGS.

This sequence belongs to the bacterial ribosomal protein bL35 family.

The sequence is that of Large ribosomal subunit protein bL35 from Dechloromonas aromatica (strain RCB).